The sequence spans 511 residues: Ribonuclease Y (511 aa).

Residues Val-3–Ile-23 traverse the membrane as a helical segment. Residues Thr-201 to Val-286 enclose the KH domain. The HD domain occupies Val-327 to Ala-420.

Belongs to the RNase Y family.

The protein resides in the cell membrane. In terms of biological role, endoribonuclease that initiates mRNA decay. In Clostridium perfringens (strain ATCC 13124 / DSM 756 / JCM 1290 / NCIMB 6125 / NCTC 8237 / Type A), this protein is Ribonuclease Y.